We begin with the raw amino-acid sequence, 91 residues long: Large ribosomal subunit protein bL27 (91 aa).

The protein belongs to the bacterial ribosomal protein bL27 family.

The sequence is that of Large ribosomal subunit protein bL27 from Chromobacterium violaceum (strain ATCC 12472 / DSM 30191 / JCM 1249 / CCUG 213 / NBRC 12614 / NCIMB 9131 / NCTC 9757 / MK).